The primary structure comprises 193 residues: dTTP/UTP pyrophosphatase (193 aa).

The Proton acceptor role is filled by D71.

It belongs to the Maf family. YhdE subfamily. A divalent metal cation serves as cofactor.

Its subcellular location is the cytoplasm. The enzyme catalyses dTTP + H2O = dTMP + diphosphate + H(+). It carries out the reaction UTP + H2O = UMP + diphosphate + H(+). Its function is as follows. Nucleoside triphosphate pyrophosphatase that hydrolyzes dTTP and UTP. May have a dual role in cell division arrest and in preventing the incorporation of modified nucleotides into cellular nucleic acids. The protein is dTTP/UTP pyrophosphatase of Citrifermentans bemidjiense (strain ATCC BAA-1014 / DSM 16622 / JCM 12645 / Bem) (Geobacter bemidjiensis).